Reading from the N-terminus, the 523-residue chain is Cysteine-rich secretory protein LCCL domain-containing 1 (523 aa).

A signal peptide spans 1-23; that stretch reads MKYVVQEWLRITTLLFIAQAVSA. In terms of domain architecture, SCP spans 66 to 206; it reads LDLHNKLRGQ…PKAVYLVCNY (141 aa). Residues 246 to 298 are disordered; the sequence is ERPYSPHEPEEETNEIERQRSKAQDATAQSRPRTHSPSGSTGSEDSEKNEVIS. A compositionally biased stretch (polar residues) spans 269-288; that stretch reads QDATAQSRPRTHSPSGSTGS. LCCL domains are found at residues 302–397 and 403–505; these read MSQI…ANSF and TVQA…PGKQ. 4 disulfides stabilise this stretch: Cys-308/Cys-326, Cys-330/Cys-350, Cys-409/Cys-431, and Cys-435/Cys-458.

It belongs to the CRISP family.

It is found in the secreted. In Gallus gallus (Chicken), this protein is Cysteine-rich secretory protein LCCL domain-containing 1 (CRISPLD1).